A 265-amino-acid chain; its full sequence is Mlc titration factor A (265 aa).

Residues His111, His148, His152, and Glu211 each coordinate Zn(2+).

This sequence belongs to the MtfA family. In terms of assembly, interacts with Mlc. It depends on Zn(2+) as a cofactor.

The protein localises to the cytoplasm. Its function is as follows. Involved in the modulation of the activity of the glucose-phosphotransferase system (glucose-PTS). Interacts with the transcriptional repressor Mlc, preventing its interaction with DNA and leading to the modulation of expression of genes regulated by Mlc, including ptsG, which encodes the PTS system glucose-specific EIICB component. In terms of biological role, shows zinc-dependent metallopeptidase activity. The protein is Mlc titration factor A of Salmonella schwarzengrund (strain CVM19633).